We begin with the raw amino-acid sequence, 78 residues long: Dihydrofolate reductase type 2 (78 aa).

NADP(+) contacts are provided by residues 32–36 and 66–69; these read KKSGA and VQIY. I68 is a substrate binding site.

In terms of assembly, homotetramer.

It catalyses the reaction (6S)-5,6,7,8-tetrahydrofolate + NADP(+) = 7,8-dihydrofolate + NADPH + H(+). The protein operates within cofactor biosynthesis; tetrahydrofolate biosynthesis; 5,6,7,8-tetrahydrofolate from 7,8-dihydrofolate: step 1/1. In terms of biological role, key enzyme in folate metabolism. Catalyzes an essential reaction for de novo glycine and purine synthesis, and for DNA precursor synthesis. The polypeptide is Dihydrofolate reductase type 2 (Escherichia coli).